A 705-amino-acid polypeptide reads, in one-letter code: Tyrosine decarboxylase (705 aa).

Over residues Arg-22 to Pro-32 the composition is skewed to polar residues. The interval Arg-22–Glu-81 is disordered. The segment covering Ser-33–Thr-55 has biased composition (low complexity). Residue Lys-380 is modified to N6-(pyridoxal phosphate)lysine. The stretch at Val-554–Lys-620 forms a coiled coil. Polar residues predominate over residues His-667–Pro-678. The interval His-667–Asp-687 is disordered.

It belongs to the group II decarboxylase family. The cofactor is pyridoxal 5'-phosphate. Expressed in the gonadal sheath projections in between the oocytes, in head RIM motor neurons and RIC interneurons.

The protein localises to the cytoplasm. It is found in the cell projection. Its subcellular location is the axon. The protein resides in the perikaryon. The enzyme catalyses L-tyrosine + H(+) = tyramine + CO2. Required for the decarboxylation of tyrosine to tyramine, a precursor of octopamine but probably also itself a neurotransmitter. Involved in the regulation of egg laying, which is inhibited by tyramine. Also involved in controlling locomotion and head movements. Due to its involvement in octopamine biosynthesis, also required for crtc-1-dependent regulation of AMPK-mediated longevity which requires octopamine signaling. This chain is Tyrosine decarboxylase, found in Caenorhabditis elegans.